Here is a 450-residue protein sequence, read N- to C-terminus: Citrate/malate-proton symporter (450 aa).

At 1–32 (MGELQTHMQLQTDTIHEGVRKENWFAKAMNIK) the chain is on the cytoplasmic side. A helical membrane pass occupies residues 33-53 (VGIIPLPVYALLFILITVFVM). Residues 54 to 64 (HHDVKSDILTS) are Extracellular-facing. A helical membrane pass occupies residues 65–85 (IAVMAFFGFTFAQIGKSIPIV). The Cytoplasmic portion of the chain corresponds to 86-87 (RS). Residues 88 to 108 (IGGPAILATFIPSAVVYYHLL) traverse the membrane as a helical segment. The Extracellular segment spans residues 109 to 118 (PNDIVKSTTE). The chain crosses the membrane as a helical span at residues 119–139 (FTENSNFLYLFIAGIVVGSIL). The Cytoplasmic segment spans residues 140-152 (GMKRETLVKAFMK). The helical transmembrane segment at 153–173 (IFIPLIVGSVTAAIVGLAVGT) threads the bilayer. The Extracellular portion of the chain corresponds to 174-217 (LLGLGFQHTLLYIVIPIMAGGVGEGAIPLSIGYSDIMPISQGEA). A helical transmembrane segment spans residues 218–238 (FALVLPSIMLGSLCAIILAGL). Residues 239-273 (LNRIGKKKPEWTGNGKVDRSEEESPALEESQSGQQ) are Cytoplasmic-facing. Residues 249–268 (WTGNGKVDRSEEESPALEES) are disordered. The chain crosses the membrane as a helical span at residues 274–294 (MFNLSLFASGGILAVSLYLVG). Position 295 (M295) is a topological domain, extracellular. Residues 296-316 (LAHDFFGFPAPVAMLLLAVLI) form a helical membrane-spanning segment. Residues 317 to 335 (KLFRLVPASIENGAFGVSR) lie on the Cytoplasmic side of the membrane. Residues 336-356 (FFSTAVTYPLLFAIGVSMTPW) traverse the membrane as a helical segment. At 357–364 (DKLVAAFN) the chain is on the extracellular side. Residues 365 to 385 (LSNIITILSVVVTMMAVGFFT) form a helical membrane-spanning segment. The Cytoplasmic portion of the chain corresponds to 386–428 (GKWLNMYPIETAIINACHSGQGGTGDVAILSAAERLELMPFAQ). The helical transmembrane segment at 429-446 (VSTRIGGAITVSLTLLLL) threads the bilayer. At 447 to 450 (HQFY) the chain is on the extracellular side.

It belongs to the 2-hydroxycarboxylate transporter (2-HCT) (TC 2.A.24) family.

The protein resides in the cell membrane. It carries out the reaction citrate(in) + 3 H(+)(in) = citrate(out) + 3 H(+)(out). The enzyme catalyses (S)-malate(in) + 2 H(+)(in) = (S)-malate(out) + 2 H(+)(out). Its activity is regulated as follows. The uptake activity is inhibited by divalent metal ions such as Ca(2+), Mg(2+) and Ni(2+). Proton motive force-driven secondary transporter that catalyzes the uptake of both citrate and malate. Is an electroneutral proton-solute symporter: the number of protons transported is equal to the valence of the transported anions. Translocates the free citrate and malate anions. Citramalate binds to the transporter, but it is not translocated. Is strictly stereoselective, recognizing only the (S)-enantiomers of malate and citramalate. This Bacillus subtilis (strain 168) protein is Citrate/malate-proton symporter.